A 418-amino-acid chain; its full sequence is Histidine--tRNA ligase (418 aa).

Belongs to the class-II aminoacyl-tRNA synthetase family.

Its subcellular location is the cytoplasm. It catalyses the reaction tRNA(His) + L-histidine + ATP = L-histidyl-tRNA(His) + AMP + diphosphate + H(+). This Methanococcus aeolicus (strain ATCC BAA-1280 / DSM 17508 / OCM 812 / Nankai-3) protein is Histidine--tRNA ligase.